A 199-amino-acid polypeptide reads, in one-letter code: Puromycin N-acetyltransferase (199 aa).

In terms of domain architecture, N-acetyltransferase spans Pro-6 to Gly-198.

Its function is as follows. Detoxification of puromycin. In Streptomyces alboniger, this protein is Puromycin N-acetyltransferase (pac).